The following is a 281-amino-acid chain: MSEHLLLAPLLESYFRRRLTKQRNATPATMASYRDALRMLILFAATRLRKKPAALVLEELDRDLILAFLDELEEKRNNTIATRNARLAAIRSFFHHVAAADPASFGVAQRVLTIPIKRAHIEVTHHLTKAEVDALIEAPNPRTPRGRRDRTFLLFLARTGARVSEATGVNANDLQLERSHPQVLLRGKGRRDRVIPIPQDLARALTALLAEHGIANHEPRPIFVGARNERLTRFGATHIVRRAVAQAVTIRPTLAQKPISPHIFRHYLPHPTMSGTENASV.

A Core-binding (CB) domain is found at 5–98 (LLLAPLLESY…AIRSFFHHVA (94 aa)). In terms of domain architecture, Tyr recombinase spans 122 to 281 (EVTHHLTKAE…TMSGTENASV (160 aa)). Active-site residues include R162, K188, H262, and R265.

This sequence belongs to the 'phage' integrase family.

In terms of biological role, seems to be non-functional. The chain is Putative integrase/recombinase y4rD from Sinorhizobium fredii (strain NBRC 101917 / NGR234).